The sequence spans 164 residues: Bacterial ferritin (164 aa).

Residues 1–147 (MKGKKSVISR…QQLGLIARMG (147 aa)) form the Ferritin-like diiron domain. Positions 18, 51, 54, 94, 129, and 132 each coordinate Fe cation.

This sequence belongs to the bacterioferritin family. In terms of assembly, heterooligomer of 24 subunits, arranged as 12 dimers, that are packed together to form an approximately spherical molecule with a central cavity, in which large amounts of iron can be deposited.

It catalyses the reaction 4 Fe(2+) + O2 + 4 H(+) = 4 Fe(3+) + 2 H2O. The enzyme catalyses Fe(2+)(in) = Fe(2+)(out). In terms of biological role, iron-storage protein, whose ferroxidase center binds Fe(2+), oxidizes it using dioxygen to Fe(3+), and participates in the subsequent Fe(3+) oxide mineral core formation within the central cavity of the BFR protein shell. This chain is Bacterial ferritin, found in Paramagnetospirillum magnetotacticum (Aquaspirillum magnetotacticum).